We begin with the raw amino-acid sequence, 187 residues long: Adenine phosphoribosyltransferase 1 (187 aa).

S68 is subject to Phosphoserine. Position 133-137 (133-137 (ATGGS)) interacts with AMP.

This sequence belongs to the purine/pyrimidine phosphoribosyltransferase family. In terms of assembly, homodimer. Mg(2+) serves as cofactor.

It localises to the cytoplasm. The protein resides in the nucleus. The catalysed reaction is AMP + diphosphate = 5-phospho-alpha-D-ribose 1-diphosphate + adenine. Its pathway is purine metabolism; AMP biosynthesis via salvage pathway; AMP from adenine: step 1/1. Functionally, catalyzes a salvage reaction resulting in the formation of AMP, that is energically less costly than de novo synthesis. This is Adenine phosphoribosyltransferase 1 from Saccharomyces cerevisiae (strain ATCC 204508 / S288c) (Baker's yeast).